Reading from the N-terminus, the 386-residue chain is 3-ketoacyl-CoA thiolase (386 aa).

Catalysis depends on Cys-91, which acts as the Acyl-thioester intermediate. Active-site proton acceptor residues include His-342 and Cys-372.

The protein belongs to the thiolase-like superfamily. Thiolase family. In terms of assembly, heterotetramer of two alpha chains (FadB) and two beta chains (FadA).

The protein localises to the cytoplasm. The enzyme catalyses an acyl-CoA + acetyl-CoA = a 3-oxoacyl-CoA + CoA. It participates in lipid metabolism; fatty acid beta-oxidation. Its function is as follows. Catalyzes the final step of fatty acid oxidation in which acetyl-CoA is released and the CoA ester of a fatty acid two carbons shorter is formed. The protein is 3-ketoacyl-CoA thiolase of Colwellia psychrerythraea (strain 34H / ATCC BAA-681) (Vibrio psychroerythus).